The sequence spans 312 residues: Ribosomal protein L11 methyltransferase (312 aa).

S-adenosyl-L-methionine is bound by residues T160, G181, D203, and N246.

Belongs to the methyltransferase superfamily. PrmA family.

The protein resides in the cytoplasm. The enzyme catalyses L-lysyl-[protein] + 3 S-adenosyl-L-methionine = N(6),N(6),N(6)-trimethyl-L-lysyl-[protein] + 3 S-adenosyl-L-homocysteine + 3 H(+). Functionally, methylates ribosomal protein L11. This Staphylococcus haemolyticus (strain JCSC1435) protein is Ribosomal protein L11 methyltransferase.